The chain runs to 341 residues: Ferrochelatase (341 aa).

Residues His-196 and Glu-277 each coordinate Fe cation.

The protein belongs to the ferrochelatase family.

It localises to the cytoplasm. The enzyme catalyses heme b + 2 H(+) = protoporphyrin IX + Fe(2+). Its pathway is porphyrin-containing compound metabolism; protoheme biosynthesis; protoheme from protoporphyrin-IX: step 1/1. In terms of biological role, catalyzes the ferrous insertion into protoporphyrin IX. This chain is Ferrochelatase, found in Synechococcus sp. (strain JA-3-3Ab) (Cyanobacteria bacterium Yellowstone A-Prime).